Reading from the N-terminus, the 292-residue chain is Protoheme IX farnesyltransferase (292 aa).

9 helical membrane-spanning segments follow: residues 13 to 33 (ILFGNFITTLGGFFLAAQGHV), 35 to 55 (FLLLILTLLGTTFVVASGCVV), 84 to 104 (TALIFAFILGIIGFGILWFWV), 106 to 126 (PYSFSFAIIGFVVYVGFYSLW), 135 to 155 (TIIGSISGASPPVIGYTAVTH), 161 to 181 (ALLIFLAYGLWQMPHSWAIAI), 206 to 226 (VECLIYIVLFAAVLNGLYCFG), 231 to 251 (FFLLTFNVLTAYWLYLSIIGF), and 263 to 283 (LFLFSVILITLLSLSFSFTYQ).

The protein belongs to the UbiA prenyltransferase family. Protoheme IX farnesyltransferase subfamily.

It is found in the cell inner membrane. The enzyme catalyses heme b + (2E,6E)-farnesyl diphosphate + H2O = Fe(II)-heme o + diphosphate. It participates in porphyrin-containing compound metabolism; heme O biosynthesis; heme O from protoheme: step 1/1. Its function is as follows. Converts heme B (protoheme IX) to heme O by substitution of the vinyl group on carbon 2 of heme B porphyrin ring with a hydroxyethyl farnesyl side group. The polypeptide is Protoheme IX farnesyltransferase (Acinetobacter baylyi (strain ATCC 33305 / BD413 / ADP1)).